We begin with the raw amino-acid sequence, 215 residues long: Cytochrome b6 (215 aa).

The helical transmembrane segment at 32–52 threads the bilayer; it reads IFYCLGGITLTCFLVQVATGF. Cys35 contributes to the heme c binding site. His86 and His100 together coordinate heme b. Helical transmembrane passes span 90–110, 116–136, and 186–206; these read ASMM…TGGF, LTWV…VTGY, and LHTF…FPMI. 2 residues coordinate heme b: His187 and His202.

This sequence belongs to the cytochrome b family. PetB subfamily. As to quaternary structure, the 4 large subunits of the cytochrome b6-f complex are cytochrome b6, subunit IV (17 kDa polypeptide, PetD), cytochrome f and the Rieske protein, while the 4 small subunits are PetG, PetL, PetM and PetN. The complex functions as a dimer. The cofactor is heme b. Heme c serves as cofactor.

The protein localises to the plastid. It is found in the chloroplast thylakoid membrane. In terms of biological role, component of the cytochrome b6-f complex, which mediates electron transfer between photosystem II (PSII) and photosystem I (PSI), cyclic electron flow around PSI, and state transitions. The protein is Cytochrome b6 of Helianthus annuus (Common sunflower).